The sequence spans 200 residues: Large ribosomal subunit protein uL4 (200 aa).

Positions threonine 42–glycine 65 are disordered.

Belongs to the universal ribosomal protein uL4 family. Part of the 50S ribosomal subunit.

Its function is as follows. One of the primary rRNA binding proteins, this protein initially binds near the 5'-end of the 23S rRNA. It is important during the early stages of 50S assembly. It makes multiple contacts with different domains of the 23S rRNA in the assembled 50S subunit and ribosome. Functionally, forms part of the polypeptide exit tunnel. This chain is Large ribosomal subunit protein uL4, found in Vibrio parahaemolyticus serotype O3:K6 (strain RIMD 2210633).